We begin with the raw amino-acid sequence, 138 residues long: ATP synthase epsilon chain (138 aa).

This sequence belongs to the ATPase epsilon chain family. As to quaternary structure, F-type ATPases have 2 components, CF(1) - the catalytic core - and CF(0) - the membrane proton channel. CF(1) has five subunits: alpha(3), beta(3), gamma(1), delta(1), epsilon(1). CF(0) has three main subunits: a, b and c.

It is found in the cell inner membrane. Produces ATP from ADP in the presence of a proton gradient across the membrane. The chain is ATP synthase epsilon chain from Delftia acidovorans (strain DSM 14801 / SPH-1).